We begin with the raw amino-acid sequence, 565 residues long: NAD-dependent malic enzyme (565 aa).

Tyrosine 104 (proton donor) is an active-site residue. Arginine 157 serves as a coordination point for NAD(+). The Proton acceptor role is filled by lysine 175. A divalent metal cation contacts are provided by glutamate 246, aspartate 247, and aspartate 270. NAD(+) contacts are provided by aspartate 270 and asparagine 418.

This sequence belongs to the malic enzymes family. As to quaternary structure, homotetramer. It depends on Mg(2+) as a cofactor. Mn(2+) is required as a cofactor.

The catalysed reaction is (S)-malate + NAD(+) = pyruvate + CO2 + NADH. The enzyme catalyses oxaloacetate + H(+) = pyruvate + CO2. In Shigella boydii serotype 18 (strain CDC 3083-94 / BS512), this protein is NAD-dependent malic enzyme.